A 490-amino-acid polypeptide reads, in one-letter code: Subtilisin-like protease 8 (490 aa).

The N-terminal stretch at 1 to 26 (MKGLLSLSVLPVLAYASPMIVDSIHQ) is a signal peptide. The propeptide occupies 27 to 134 (NAAPILSSTN…YIERDSEVHT (108 aa)). Residues 43 to 134 (SYIVVFKKGV…YIERDSEVHT (92 aa)) form the Inhibitor I9 domain. The region spanning 144–450 (PWGLARISHR…GGSDDYKKII (307 aa)) is the Peptidase S8 domain. Catalysis depends on charge relay system residues Asp180 and His212. Asn282 carries an N-linked (GlcNAc...) asparagine glycan. Residue Ser378 is the Charge relay system of the active site. Asn456 carries an N-linked (GlcNAc...) asparagine glycan.

It belongs to the peptidase S8 family.

It localises to the secreted. Secreted subtilisin-like serine protease with keratinolytic activity that contributes to pathogenicity. The sequence is that of Subtilisin-like protease 8 (SUB8) from Arthroderma benhamiae (strain ATCC MYA-4681 / CBS 112371) (Trichophyton mentagrophytes).